The following is a 418-amino-acid chain: GTPase Obg (418 aa).

The 156-residue stretch at 1–156 (MKFIDEITLN…KKLTLVLKVL (156 aa)) folds into the Obg domain. One can recognise an OBG-type G domain in the interval 157-324 (ADVGFVGKPS…LKEALWQSVK (168 aa)). Residues 163 to 170 (GKPSAGKS), 188 to 192 (FTTLV), 209 to 212 (DLPG), 278 to 281 (NKKD), and 305 to 307 (SAL) each bind GTP. Residues S170 and T190 each contribute to the Mg(2+) site. The 79-residue stretch at 339 to 417 (VFINFEADFN…IYDYEFVWGN (79 aa)) folds into the OCT domain.

It belongs to the TRAFAC class OBG-HflX-like GTPase superfamily. OBG GTPase family. In terms of assembly, monomer. Mg(2+) is required as a cofactor.

Its subcellular location is the cytoplasm. An essential GTPase which binds GTP, GDP and possibly (p)ppGpp with moderate affinity, with high nucleotide exchange rates and a fairly low GTP hydrolysis rate. Plays a role in control of the cell cycle, stress response, ribosome biogenesis and in those bacteria that undergo differentiation, in morphogenesis control. The polypeptide is GTPase Obg (Mycoplasmopsis pulmonis (strain UAB CTIP) (Mycoplasma pulmonis)).